Reading from the N-terminus, the 245-residue chain is tRNA pseudouridine synthase A (245 aa).

D52 serves as the catalytic Nucleophile. Y111 provides a ligand contact to substrate.

Belongs to the tRNA pseudouridine synthase TruA family. In terms of assembly, homodimer.

The enzyme catalyses uridine(38/39/40) in tRNA = pseudouridine(38/39/40) in tRNA. Formation of pseudouridine at positions 38, 39 and 40 in the anticodon stem and loop of transfer RNAs. The sequence is that of tRNA pseudouridine synthase A from Rickettsia rickettsii (strain Iowa).